A 303-amino-acid polypeptide reads, in one-letter code: tRNA pseudouridine synthase B (303 aa).

The active-site Nucleophile is D38.

The protein belongs to the pseudouridine synthase TruB family. Type 1 subfamily.

It catalyses the reaction uridine(55) in tRNA = pseudouridine(55) in tRNA. Responsible for synthesis of pseudouridine from uracil-55 in the psi GC loop of transfer RNAs. This chain is tRNA pseudouridine synthase B, found in Levilactobacillus brevis (strain ATCC 367 / BCRC 12310 / CIP 105137 / JCM 1170 / LMG 11437 / NCIMB 947 / NCTC 947) (Lactobacillus brevis).